The sequence spans 89 residues: Small ribosomal subunit protein uS14A (89 aa).

The interval 34–54 (ESLRKLPRDSNPNRLKNRDKI) is disordered.

The protein belongs to the universal ribosomal protein uS14 family. In terms of assembly, part of the 30S ribosomal subunit. Contacts proteins S3 and S10.

Functionally, binds 16S rRNA, required for the assembly of 30S particles and may also be responsible for determining the conformation of the 16S rRNA at the A site. The sequence is that of Small ribosomal subunit protein uS14A from Streptococcus pyogenes serotype M1.